Here is a 1131-residue protein sequence, read N- to C-terminus: Plasma membrane ATPase (1131 aa).

Transmembrane regions (helical) follow at residues 77-97 (PVLVFLGYMWNPLAWAMEAAA), 98-118 (IISIALLDVADFVLIVGLLLI), 151-171 (GAIVTIDAVNLVPGDVILIRL), 231-251 (AVVYATGVNTFFGRAAALISG), 265-285 (MSAICIVTILLWVVVELAVQF), and 305-325 (MLVVLVGGIPIAMPTVLSVTL). D357 serves as the catalytic 4-aspartylphosphate intermediate. Residues D615 and D619 each coordinate Mg(2+). The next 5 membrane-spanning stretches (helical) occupy residues 642–662 (AADIVLTEPGLSTIVTAVIGA), 689–709 (LITVIYDWYFPTILIVIMAVF), 733–753 (ITNIFIMGMVYGLYLTLSTWA), 884–904 (LAFFFAQVGATLFGIFGLGGF), and 946–966 (VIGCGGYVIVAWIWSAIWYVL). Basic and acidic residues predominate over residues 994-1010 (KRSLDRRSKDDIGDKEF). Disordered regions lie at residues 994 to 1023 (KRSLDRRSKDDIGDKEFTGPSGMVPANYSN) and 1067 to 1131 (RRSM…TIRE). Residues 1089–1100 (SRTSNTLSTGSK) show a composition bias toward polar residues. A compositionally biased stretch (basic and acidic residues) spans 1118–1131 (IKPDKYDFASTIRE).

This sequence belongs to the cation transport ATPase (P-type) (TC 3.A.3) family. Type IIIA subfamily.

It is found in the cell membrane. It catalyses the reaction ATP + H2O + H(+)(in) = ADP + phosphate + 2 H(+)(out). The plasma membrane ATPase of plants and fungi is a hydrogen ion pump. The proton gradient it generates drives the active transport of nutrients by H(+)-symport. The resulting external acidification and/or internal alkinization may mediate growth responses. The chain is Plasma membrane ATPase (PMA1) from Dunaliella bioculata (Green alga).